A 352-amino-acid polypeptide reads, in one-letter code: Holliday junction branch migration complex subunit RuvB (352 aa).

The tract at residues M1–P42 is disordered. The large ATPase domain (RuvB-L) stretch occupies residues S13–Y201. A compositionally biased stretch (basic and acidic residues) spans S33–P42. L40, R41, G82, K85, T86, T87, R191, Y201, and R238 together coordinate ATP. T86 serves as a coordination point for Mg(2+). The small ATPAse domain (RuvB-S) stretch occupies residues G202–R273. Residues A276 to P352 form a head domain (RuvB-H) region. DNA is bound by residues R331 and R336.

It belongs to the RuvB family. As to quaternary structure, homohexamer. Forms an RuvA(8)-RuvB(12)-Holliday junction (HJ) complex. HJ DNA is sandwiched between 2 RuvA tetramers; dsDNA enters through RuvA and exits via RuvB. An RuvB hexamer assembles on each DNA strand where it exits the tetramer. Each RuvB hexamer is contacted by two RuvA subunits (via domain III) on 2 adjacent RuvB subunits; this complex drives branch migration. In the full resolvosome a probable DNA-RuvA(4)-RuvB(12)-RuvC(2) complex forms which resolves the HJ.

The protein localises to the cytoplasm. The catalysed reaction is ATP + H2O = ADP + phosphate + H(+). Functionally, the RuvA-RuvB-RuvC complex processes Holliday junction (HJ) DNA during genetic recombination and DNA repair, while the RuvA-RuvB complex plays an important role in the rescue of blocked DNA replication forks via replication fork reversal (RFR). RuvA specifically binds to HJ cruciform DNA, conferring on it an open structure. The RuvB hexamer acts as an ATP-dependent pump, pulling dsDNA into and through the RuvAB complex. RuvB forms 2 homohexamers on either side of HJ DNA bound by 1 or 2 RuvA tetramers; 4 subunits per hexamer contact DNA at a time. Coordinated motions by a converter formed by DNA-disengaged RuvB subunits stimulates ATP hydrolysis and nucleotide exchange. Immobilization of the converter enables RuvB to convert the ATP-contained energy into a lever motion, pulling 2 nucleotides of DNA out of the RuvA tetramer per ATP hydrolyzed, thus driving DNA branch migration. The RuvB motors rotate together with the DNA substrate, which together with the progressing nucleotide cycle form the mechanistic basis for DNA recombination by continuous HJ branch migration. Branch migration allows RuvC to scan DNA until it finds its consensus sequence, where it cleaves and resolves cruciform DNA. This chain is Holliday junction branch migration complex subunit RuvB, found in Prochlorococcus marinus (strain MIT 9303).